The following is a 486-amino-acid chain: Glutamyl-tRNA(Gln) amidotransferase subunit A (486 aa).

Catalysis depends on charge relay system residues Lys75 and Ser150. The active-site Acyl-ester intermediate is Ser174.

The protein belongs to the amidase family. GatA subfamily. As to quaternary structure, heterotrimer of A, B and C subunits.

The catalysed reaction is L-glutamyl-tRNA(Gln) + L-glutamine + ATP + H2O = L-glutaminyl-tRNA(Gln) + L-glutamate + ADP + phosphate + H(+). Functionally, allows the formation of correctly charged Gln-tRNA(Gln) through the transamidation of misacylated Glu-tRNA(Gln) in organisms which lack glutaminyl-tRNA synthetase. The reaction takes place in the presence of glutamine and ATP through an activated gamma-phospho-Glu-tRNA(Gln). The polypeptide is Glutamyl-tRNA(Gln) amidotransferase subunit A (Trichormus variabilis (strain ATCC 29413 / PCC 7937) (Anabaena variabilis)).